The primary structure comprises 1863 residues: E3 ubiquitin-protein ligase ubr3 (1863 aa).

The segment at 80-151 adopts a UBR-type zinc-finger fold; it reads TLCGLVWTAN…ESGFCNRHRL (72 aa). Disordered regions lie at residues 302–330, 970–995, and 1128–1152; these read LDDSSKEEDQDGLQGVGQRKRVKLSSSTK, PEVERKRERERERETPPSTSSESATF, and IPPKKISPGDKKSMDKEERRQRARE. Composition is skewed to basic and acidic residues over residues 971–984 and 1134–1152; these read EVERKRERERERET and SPGDKKSMDKEERRQRARE. The segment at 1270–1328 adopts an RING-type; degenerate zinc-finger fold; the sequence is DSSCLQSVSIGWDGGVYVQTCGHTLHIDCHKSYMESLRNDQVLQGISVDKGEFTCPLCR.

Belongs to the E3 ubiquitin-protein ligase UBR1-like family.

The enzyme catalyses S-ubiquitinyl-[E2 ubiquitin-conjugating enzyme]-L-cysteine + [acceptor protein]-L-lysine = [E2 ubiquitin-conjugating enzyme]-L-cysteine + N(6)-ubiquitinyl-[acceptor protein]-L-lysine.. The protein operates within protein modification; protein ubiquitination. Functionally, E3 ubiquitin-protein ligase which is a component of the N-end rule pathway. Recognizes and binds to proteins bearing specific N-terminal residues, leading to their ubiquitination and subsequent degradation. Positively regulates hedgehog/shh-signaling pathways that function in eye development, neuronal specification and somite development. Activation of shh up-regulates transcription of ubr3, which in turn promotes hedgehog/shh signaling possibly by controlling negative regulators such as Kif7. The sequence is that of E3 ubiquitin-protein ligase ubr3 from Danio rerio (Zebrafish).